A 339-amino-acid chain; its full sequence is UDP-galactose transporter homolog 1 (339 aa).

Residues 1–4 (MAGS) lie on the Lumenal side of the membrane. Residues 5–25 (TSSLVICAIGIYATFLTWALV) traverse the membrane as a helical segment. Topologically, residues 26-42 (QEPLATRTWPNSMGKFQ) are cytoplasmic. A helical membrane pass occupies residues 43 to 63 (FPNVISLIQASVAMMMGYLYL). Residues 64–106 (NWKKVEYPPRKMIKDHWKQLMLISFTQSSSGPLATTSLKHVDY) lie on the Lumenal side of the membrane. A helical transmembrane segment spans residues 107 to 127 (LTYMLAKSCKMIPVLLVHLLL). The Cytoplasmic portion of the chain corresponds to 128–136 (YRTPIASQK). Residues 137 to 157 (KVVALLVSLGVTIFTIGGNDG) traverse the membrane as a helical segment. At 158 to 174 (KKLKRSFNESGNDNKLQ) the chain is on the lumenal side. Asparagine 165 carries N-linked (GlcNAc...) asparagine glycosylation. The helical transmembrane segment at 175–192 (GFGLLFSSLFLDGLTNAT) threads the bilayer. Over 193–214 (QDKLLKANKAKEKGKQTLITGA) the chain is Cytoplasmic. Residues 215-235 (HLMFTLNLFVILWNILYFIVI) form a helical membrane-spanning segment. At 236–245 (DCKQWDNAVS) the chain is on the lumenal side. The chain crosses the membrane as a helical span at residues 246–266 (VLTMDPQVWGYLMLYSFCGAM). Topologically, residues 267–280 (GQCFIFYTLEQFGS) are cytoplasmic. A helical transmembrane segment spans residues 281-303 (LVLIMITVTRKMVSMILSIIVFG). Over 304 to 307 (KSVR) the chain is Lumenal. The chain crosses the membrane as a helical span at residues 308–327 (FQQWVGMFIVFGGITWEALN). Over 328–339 (KKKANIPKAKSA) the chain is Cytoplasmic.

The protein belongs to the nucleotide-sugar transporter family. SLC35B subfamily.

The protein localises to the endoplasmic reticulum membrane. In terms of biological role, may be involved in specific transport of UDP-Gal from the cytosol to the Golgi lumen. Involved in the maintenance of optimal conditions for the folding of secretory pathway proteins in the endoplasmic reticulum. Overexpression confers resistance to the immunosuppressive drug, leflunomide. This chain is UDP-galactose transporter homolog 1 (HUT1), found in Saccharomyces cerevisiae (strain ATCC 204508 / S288c) (Baker's yeast).